The sequence spans 746 residues: Polyribonucleotide nucleotidyltransferase (746 aa).

D490 and D496 together coordinate Mg(2+). The 63-residue stretch at P557–I619 folds into the KH domain. An S1 motif domain is found at G629–K699. Positions L701–D746 are disordered. Over residues E706–D746 the composition is skewed to basic and acidic residues.

Belongs to the polyribonucleotide nucleotidyltransferase family. It depends on Mg(2+) as a cofactor.

Its subcellular location is the cytoplasm. It carries out the reaction RNA(n+1) + phosphate = RNA(n) + a ribonucleoside 5'-diphosphate. Its function is as follows. Involved in mRNA degradation. Catalyzes the phosphorolysis of single-stranded polyribonucleotides processively in the 3'- to 5'-direction. This chain is Polyribonucleotide nucleotidyltransferase, found in Parabacteroides distasonis (strain ATCC 8503 / DSM 20701 / CIP 104284 / JCM 5825 / NCTC 11152).